A 162-amino-acid chain; its full sequence is Peroxiredoxin-2C (162 aa).

In terms of domain architecture, Thioredoxin spans 4 to 162 (ITVGDVVPDG…SSAEDILKAL (159 aa)). Cys51 serves as the catalytic Cysteine sulfenic acid (-SOH) intermediate.

The protein belongs to the peroxiredoxin family. Prx5 subfamily. In terms of assembly, monomer. Highly expressed in buds and flowers. Slightly expressed in green tissues. Also detected in pollen.

The protein localises to the cytoplasm. The catalysed reaction is [glutaredoxin]-dithiol + a hydroperoxide = [glutaredoxin]-disulfide + an alcohol + H2O. In terms of biological role, thiol-specific peroxidase that catalyzes the reduction of hydrogen peroxide and organic hydroperoxides to water and alcohols, respectively. Plays a role in cell protection against oxidative stress by detoxifying peroxides and as sensor of hydrogen peroxide-mediated signaling events. The polypeptide is Peroxiredoxin-2C (PRXIIC) (Arabidopsis thaliana (Mouse-ear cress)).